Consider the following 318-residue polypeptide: Putative HTH-type transcriptional regulatory protein MJ1164 (318 aa).

In terms of domain architecture, HTH cro/C1-type spans leucine 131–phenylalanine 189. The segment at residues valine 142–threonine 161 is a DNA-binding region (H-T-H motif).

The protein is Putative HTH-type transcriptional regulatory protein MJ1164 of Methanocaldococcus jannaschii (strain ATCC 43067 / DSM 2661 / JAL-1 / JCM 10045 / NBRC 100440) (Methanococcus jannaschii).